A 161-amino-acid polypeptide reads, in one-letter code: Regulator of ribonuclease activity A (161 aa).

It belongs to the RraA family. In terms of assembly, homotrimer. Binds to both RNA-binding sites in the C-terminal region of Rne and to RhlB.

The protein localises to the cytoplasm. Globally modulates RNA abundance by binding to RNase E (Rne) and regulating its endonucleolytic activity. Can modulate Rne action in a substrate-dependent manner by altering the composition of the degradosome. Modulates RNA-binding and helicase activities of the degradosome. This Shewanella oneidensis (strain ATCC 700550 / JCM 31522 / CIP 106686 / LMG 19005 / NCIMB 14063 / MR-1) protein is Regulator of ribonuclease activity A.